A 507-amino-acid polypeptide reads, in one-letter code: ATP synthase subunit alpha, chloroplastic (507 aa).

ATP is bound at residue 170 to 177; sequence GDRQTGKT. At Thr-257 the chain carries Phosphothreonine.

The protein belongs to the ATPase alpha/beta chains family. F-type ATPases have 2 components, CF(1) - the catalytic core - and CF(0) - the membrane proton channel. CF(1) has five subunits: alpha(3), beta(3), gamma(1), delta(1), epsilon(1). CF(0) has four main subunits: a, b, b' and c.

It is found in the plastid. It localises to the chloroplast thylakoid membrane. It catalyses the reaction ATP + H2O + 4 H(+)(in) = ADP + phosphate + 5 H(+)(out). Functionally, produces ATP from ADP in the presence of a proton gradient across the membrane. The alpha chain is a regulatory subunit. The sequence is that of ATP synthase subunit alpha, chloroplastic from Draba nemorosa (Woodland whitlowgrass).